Consider the following 298-residue polypeptide: Large ribosomal subunit protein uL18 (298 aa).

It belongs to the universal ribosomal protein uL18 family. Component of the large ribosomal subunit. Mature ribosomes consist of a small (40S) and a large (60S) subunit. The 40S subunit contains about 32 different proteins and 1 molecule of RNA (18S). The 60S subunit contains 45 different proteins and 3 molecules of RNA (25S, 5.8S and 5S).

Its subcellular location is the cytoplasm. Its function is as follows. Component of the ribosome, a large ribonucleoprotein complex responsible for the synthesis of proteins in the cell. The small ribosomal subunit (SSU) binds messenger RNAs (mRNAs) and translates the encoded message by selecting cognate aminoacyl-transfer RNA (tRNA) molecules. The large subunit (LSU) contains the ribosomal catalytic site termed the peptidyl transferase center (PTC), which catalyzes the formation of peptide bonds, thereby polymerizing the amino acids delivered by tRNAs into a polypeptide chain. The nascent polypeptides leave the ribosome through a tunnel in the LSU and interact with protein factors that function in enzymatic processing, targeting, and the membrane insertion of nascent chains at the exit of the ribosomal tunnel. The polypeptide is Large ribosomal subunit protein uL18 (Candida albicans (strain SC5314 / ATCC MYA-2876) (Yeast)).